A 219-amino-acid chain; its full sequence is Glutathione S-transferase U19 (219 aa).

The GST N-terminal domain occupies 3-82 (NEVILLDFWP…YIDEVWSHKN (80 aa)). Glutathione is bound by residues 13-14 (SM), 39-40 (NK), 53-54 (KI), and 66-67 (ES). One can recognise a GST C-terminal domain in the interval 88 to 208 (DPYLRAQARF…LPDPEKVTEF (121 aa)). Serine 198 is subject to Phosphoserine.

The protein belongs to the GST superfamily. Tau family.

Its subcellular location is the cytoplasm. The protein resides in the cytosol. The enzyme catalyses RX + glutathione = an S-substituted glutathione + a halide anion + H(+). Its function is as follows. Catalyzes the glutathionylation of 12-oxophytodienoate (OPDA). In vitro, possesses glutathione S-transferase activity toward 1-chloro-2,4-dinitrobenzene (CDNB) and benzyl isothiocyanate (BITC), and glutathione peroxidase activity toward cumene hydroperoxide. This chain is Glutathione S-transferase U19 (GSTU19), found in Arabidopsis thaliana (Mouse-ear cress).